We begin with the raw amino-acid sequence, 1029 residues long: 2-oxoglutarate dehydrogenase, mitochondrial (1029 aa).

Arg317, Asp415, Asn448, Ile450, and Gln676 together coordinate thiamine diphosphate. Residues Asp415, Asn448, and Ile450 each contribute to the Mg(2+) site.

It belongs to the alpha-ketoglutarate dehydrogenase family. As to quaternary structure, homodimer. Component of the 2-oxoglutarate dehydrogenase complex. Thiamine diphosphate is required as a cofactor. It depends on Mg(2+) as a cofactor.

The protein localises to the mitochondrion matrix. It catalyses the reaction N(6)-[(R)-lipoyl]-L-lysyl-[protein] + 2-oxoglutarate + H(+) = N(6)-[(R)-S(8)-succinyldihydrolipoyl]-L-lysyl-[protein] + CO2. The 2-oxoglutarate dehydrogenase complex catalyzes the overall conversion of 2-oxoglutarate to succinyl-CoA and CO(2). It contains multiple copies of three enzymatic components: 2-oxoglutarate dehydrogenase (E1), dihydrolipoamide succinyltransferase (E2) and lipoamide dehydrogenase (E3). This chain is 2-oxoglutarate dehydrogenase, mitochondrial (ogdh-1), found in Caenorhabditis elegans.